A 388-amino-acid chain; its full sequence is Cdc42 effector protein 1 (388 aa).

Residues 1–28 (MPGPQGGTGAPSMSLGKLSPVGWVPSSH) form a disordered region. Residues S19 and S27 each carry the phosphoserine modification. T34 is subject to Phosphothreonine. Residues 38–52 (ISPPLGDFRHTMHVG) form the CRIB domain. The residue at position 39 (S39) is a Phosphoserine. The residue at position 53 (R53) is an Omega-N-methylarginine. Phosphoserine occurs at positions 65, 77, 101, 113, 121, and 139. The interval 165–206 (RLPRVEKHSSRDRDHDRDPDHSQDREQSSSPSEPNPNPELRR) is disordered. Basic and acidic residues predominate over residues 167–191 (PRVEKHSSRDRDHDRDPDHSQDREQ). S193, S207, S209, and S212 each carry phosphoserine. A run of 2 repeats spans residues 237 to 243 (PAANPPA) and 250 to 256 (PTAKPPA). Positions 237–257 (PAANPPAPAANPAPTAKPPAD) are disordered. The interval 237–270 (PAANPPAPAANPAPTAKPPADAVTTLDTVTSLPA) is 2 X 7 AA tandem repeats of [PT]-[AT]-A-[ENT]-[PT]-[PTS]-[AG]. Pro residues predominate over residues 239-253 (ANPPAPAANPAPTAK). Residues S298, S318, S347, and S350 each carry the phosphoserine modification.

The protein belongs to the BORG/CEP family. Interacts with RHOQ and CDC42, in a GTP-dependent manner.

The protein localises to the endomembrane system. Its subcellular location is the cytoplasm. It localises to the cytoskeleton. Its function is as follows. Probably involved in the organization of the actin cytoskeleton. Induced membrane extensions in fibroblasts. The protein is Cdc42 effector protein 1 of Rattus norvegicus (Rat).